A 685-amino-acid chain; its full sequence is Protein DIA2 (685 aa).

3 TPR repeats span residues 6-39 (IDRS…ARSY), 70-103 (LVLL…DAYN), and 104-137 (LKGY…AGEA). One can recognise an F-box domain in the interval 207–254 (IDYIATLPVEIIERIMANMDTRSIIRCYSVCKLWKYRLERLPHLYQEF). 7 LRR repeats span residues 300 to 323 (ILLL…CKAE), 353 to 377 (KLNL…NFHT), 454 to 480 (MPNL…IVQV), 499 to 517 (FDRM…LREV), 518 to 542 (FQSL…LLQP), 562 to 585 (ARDL…LLPN), and 598 to 622 (RKNI…GYEL).

It belongs to the DIA2 family. Forms a SCF ubiquitin ligase complex which binds to DNA replication origins.

It localises to the nucleus. Its function is as follows. F-box protein component of a SCF ubiquitin ligase complex involved in ubiquitin-dependent protein degradation. The SCF-DIA2 complex is specifically involved in the pheromone induced degradation of phosphorylated TEC1. Involved in DNA replication, genome stability, and the control of cell cycle, probably through its association to replication origins to facilitate the ubiquitination of another origin-binding protein. This Eremothecium gossypii (strain ATCC 10895 / CBS 109.51 / FGSC 9923 / NRRL Y-1056) (Yeast) protein is Protein DIA2 (DIA2).